We begin with the raw amino-acid sequence, 236 residues long: tRNA (guanine-N(7)-)-methyltransferase (236 aa).

The segment at 1–23 (MEADVQRAQQAQLEKGSSVPPWT) is disordered. S-adenosyl-L-methionine-binding residues include Asp-69, Glu-94, Asn-121, and Asp-144. Asp-144 is a catalytic residue. Substrate contacts are provided by Lys-148 and Asp-180.

This sequence belongs to the class I-like SAM-binding methyltransferase superfamily. TrmB family.

The catalysed reaction is guanosine(46) in tRNA + S-adenosyl-L-methionine = N(7)-methylguanosine(46) in tRNA + S-adenosyl-L-homocysteine. The protein operates within tRNA modification; N(7)-methylguanine-tRNA biosynthesis. In terms of biological role, catalyzes the formation of N(7)-methylguanine at position 46 (m7G46) in tRNA. The chain is tRNA (guanine-N(7)-)-methyltransferase from Synechococcus sp. (strain JA-3-3Ab) (Cyanobacteria bacterium Yellowstone A-Prime).